A 283-amino-acid chain; its full sequence is Bifunctional protein FolD (283 aa).

NADP(+) is bound by residues G165–S167, S190, and I231.

This sequence belongs to the tetrahydrofolate dehydrogenase/cyclohydrolase family. Homodimer.

It catalyses the reaction (6R)-5,10-methylene-5,6,7,8-tetrahydrofolate + NADP(+) = (6R)-5,10-methenyltetrahydrofolate + NADPH. The enzyme catalyses (6R)-5,10-methenyltetrahydrofolate + H2O = (6R)-10-formyltetrahydrofolate + H(+). Its pathway is one-carbon metabolism; tetrahydrofolate interconversion. Its function is as follows. Catalyzes the oxidation of 5,10-methylenetetrahydrofolate to 5,10-methenyltetrahydrofolate and then the hydrolysis of 5,10-methenyltetrahydrofolate to 10-formyltetrahydrofolate. The chain is Bifunctional protein FolD from Janthinobacterium sp. (strain Marseille) (Minibacterium massiliensis).